The primary structure comprises 103 residues: uncharacterized protein (103 aa).

Residues 38-58 (FTTLITIYVAAFYTGVIGAAV) form a helical membrane-spanning segment.

The protein resides in the membrane. This is an uncharacterized protein from Arabidopsis thaliana (Mouse-ear cress).